The sequence spans 67 residues: Bowman-Birk type major trypsin inhibitor (67 aa).

Intrachain disulfides connect C8-C63, C9-C24, C14-C22, C31-C38, and C35-C51.

Belongs to the Bowman-Birk serine protease inhibitor family.

The protein is Bowman-Birk type major trypsin inhibitor of Setaria italica (Foxtail millet).